A 207-amino-acid polypeptide reads, in one-letter code: Proteasome subunit beta 2 (207 aa).

Positions 1-10 (MLQLTEKFKG) are cleaved as a propeptide — removed in mature form; by autocatalysis. Catalysis depends on T11, which acts as the Nucleophile.

This sequence belongs to the peptidase T1B family. The 20S proteasome core is composed of 14 alpha and 14 beta subunits that assemble into four stacked heptameric rings, resulting in a barrel-shaped structure. The two inner rings, each composed of seven catalytic beta subunits, are sandwiched by two outer rings, each composed of seven alpha subunits. The catalytic chamber with the active sites is on the inside of the barrel. Has a gated structure, the ends of the cylinder being occluded by the N-termini of the alpha-subunits. Is capped at one or both ends by the proteasome regulatory ATPase, PAN.

It is found in the cytoplasm. The enzyme catalyses Cleavage of peptide bonds with very broad specificity.. The formation of the proteasomal ATPase PAN-20S proteasome complex, via the docking of the C-termini of PAN into the intersubunit pockets in the alpha-rings, triggers opening of the gate for substrate entry. Interconversion between the open-gate and close-gate conformations leads to a dynamic regulation of the 20S proteasome proteolysis activity. Its function is as follows. Component of the proteasome core, a large protease complex with broad specificity involved in protein degradation. The polypeptide is Proteasome subunit beta 2 (Pyrococcus abyssi (strain GE5 / Orsay)).